The sequence spans 698 residues: MARTTPIERYRNIGIVAHVDAGKTTTTERVLFYTGLSHKIGEVHDGAATTDWMVQEQERGITITSAAVTTFWRGMDAQFTEHRINIIDTPGHVDFTIEVERSLRVLDGAVVVFCGSSGVEPQSETVWRQADKYRVPRMVFVNKMDRAGANFDRVVDQIRTRLGATCVPIQMNIGAEEEFKGVIDLIKMKAINWSEEDQGMTFSYEEIPAHLAAKAAEMHEYLVEAAAEASEELMDKYLETGNLSELEIKQALRQRTIDNEIVLATCGSAFKNKGVQAVLDAVVDYLPAPIDVPAIKGIDEHDAEVERPSDDNAPFAALAFKIATDPFVGTLTFIRVYSGVLQSGSGVYNSVKEKRERVGRIVQMHANDRTELKEVRAGDIAAAIGLKDVTTGDTLCDNDHRVILERMEFPEPVITIAVEPRSQADQDKMAIALQKLAAEDPSFRVETDEDSAQTLISGMGELHLDIIVDRMRREFGVECNVGKPQVSYRETIRSTVEVEGKFVRQSGGRGQFGHVWLRLEPLEEGAGYEFVNEVVGGVIPREYIPAVDKGIQEQMKNGVLASFPVLDVKVTLFDGSYHDVDSNEMAFKIAGSMGFKKGALLANPSLLEPCMKVEVTTPADYMGDVVGDLNRRRGLIDGMDDGIGGVKLIHAVVPLAEMFGYATDLRSATQGRASYSMEFLKYSDAPQNIAKAIIESRS.

Residues 8-290 (ERYRNIGIVA…AVVDYLPAPI (283 aa)) enclose the tr-type G domain. Residues 17-24 (AHVDAGKT), 88-92 (DTPGH), and 142-145 (NKMD) each bind GTP.

Belongs to the TRAFAC class translation factor GTPase superfamily. Classic translation factor GTPase family. EF-G/EF-2 subfamily.

The protein localises to the cytoplasm. Its function is as follows. Catalyzes the GTP-dependent ribosomal translocation step during translation elongation. During this step, the ribosome changes from the pre-translocational (PRE) to the post-translocational (POST) state as the newly formed A-site-bound peptidyl-tRNA and P-site-bound deacylated tRNA move to the P and E sites, respectively. Catalyzes the coordinated movement of the two tRNA molecules, the mRNA and conformational changes in the ribosome. This is Elongation factor G 1 from Shewanella denitrificans (strain OS217 / ATCC BAA-1090 / DSM 15013).